Consider the following 215-residue polypeptide: Orotate phosphoribosyltransferase (215 aa).

5-phospho-alpha-D-ribose 1-diphosphate is bound at residue Lys26. Orotate is bound at residue 34–35 (FF). Residues 72-73 (YK), Arg99, Lys100, Lys103, His105, and 125-133 (DDVISSGIS) contribute to the 5-phospho-alpha-D-ribose 1-diphosphate site. Orotate is bound by residues Ser129 and Arg157.

It belongs to the purine/pyrimidine phosphoribosyltransferase family. PyrE subfamily. Homodimer. Mg(2+) is required as a cofactor.

It carries out the reaction orotidine 5'-phosphate + diphosphate = orotate + 5-phospho-alpha-D-ribose 1-diphosphate. The protein operates within pyrimidine metabolism; UMP biosynthesis via de novo pathway; UMP from orotate: step 1/2. Functionally, catalyzes the transfer of a ribosyl phosphate group from 5-phosphoribose 1-diphosphate to orotate, leading to the formation of orotidine monophosphate (OMP). This is Orotate phosphoribosyltransferase from Halorhodospira halophila (strain DSM 244 / SL1) (Ectothiorhodospira halophila (strain DSM 244 / SL1)).